The sequence spans 94 residues: Small ribosomal subunit protein bS6 (94 aa).

The protein belongs to the bacterial ribosomal protein bS6 family.

Binds together with bS18 to 16S ribosomal RNA. The chain is Small ribosomal subunit protein bS6 from Clostridium botulinum (strain Loch Maree / Type A3).